The following is a 29-amino-acid chain: Dermaseptin-J8 (29 aa).

Expressed by the skin glands.

Its subcellular location is the secreted. Functionally, has antimicrobial activity. The sequence is that of Dermaseptin-J8 from Phasmahyla jandaia (Jandaia leaf frog).